Reading from the N-terminus, the 305-residue chain is GTPase Era (305 aa).

In terms of domain architecture, Era-type G spans 11–181; that stretch reads RSGFISFVGR…LDVITRLLPE (171 aa). Positions 19 to 26 are G1; sequence GRPNTGKS. 19 to 26 contacts GTP; sequence GRPNTGKS. A G2 region spans residues 45-49; it reads ETTRH. A G3 region spans residues 66–69; it reads DTPG. GTP contacts are provided by residues 66–70 and 130–133; these read DTPGL and TKVD. The segment at 130-133 is G4; the sequence is TKVD. The interval 160-162 is G5; it reads VSA. Residues 212–291 enclose the KH type-2 domain; that stretch reads LKDELPHSVA…YLDLRIKVLK (80 aa).

Belongs to the TRAFAC class TrmE-Era-EngA-EngB-Septin-like GTPase superfamily. Era GTPase family. As to quaternary structure, monomer.

It localises to the cytoplasm. It is found in the cell membrane. Functionally, an essential GTPase that binds both GDP and GTP, with rapid nucleotide exchange. Plays a role in 16S rRNA processing and 30S ribosomal subunit biogenesis and possibly also in cell cycle regulation and energy metabolism. This Corynebacterium diphtheriae (strain ATCC 700971 / NCTC 13129 / Biotype gravis) protein is GTPase Era.